The primary structure comprises 201 residues: Recombination protein RecR (201 aa).

The C4-type zinc-finger motif lies at 60–75 (CKSCGNIDTRNPCTVC). The Toprim domain maps to 83-178 (SIIVVVADVA…KVTRLAHGVP (96 aa)).

The protein belongs to the RecR family.

Functionally, may play a role in DNA repair. It seems to be involved in an RecBC-independent recombinational process of DNA repair. It may act with RecF and RecO. The polypeptide is Recombination protein RecR (Rhodopseudomonas palustris (strain BisB5)).